We begin with the raw amino-acid sequence, 58 residues long: Large ribosomal subunit protein uL30 (58 aa).

It belongs to the universal ribosomal protein uL30 family. In terms of assembly, part of the 50S ribosomal subunit.

The sequence is that of Large ribosomal subunit protein uL30 from Pseudomonas putida (strain ATCC 700007 / DSM 6899 / JCM 31910 / BCRC 17059 / LMG 24140 / F1).